A 348-amino-acid chain; its full sequence is Alcohol dehydrogenase 1 (348 aa).

The residue at position 2 (S2) is an N-acetylserine. C44 contributes to the Zn(2+) binding site. Residues H45, T46, and H49 each contribute to the NAD(+) site. Zn(2+) contacts are provided by H67, E68, C98, C101, C104, C112, and C154. Residues G181, G182, L183, D202, and K207 each contribute to the NAD(+) site. A Phosphoserine modification is found at S213. Residue F222 coordinates NAD(+). Phosphothreonine is present on T223. Residues K226 and K234 each participate in a glycyl lysine isopeptide (Lys-Gly) (interchain with G-Cter in ubiquitin) cross-link. 2 residues coordinate NAD(+): V269 and M271. S279 is modified (phosphoserine). K287 participates in a covalent cross-link: Glycyl lysine isopeptide (Lys-Gly) (interchain with G-Cter in ubiquitin). NAD(+) is bound by residues S294 and V296. The residue at position 316 (S316) is a Phosphoserine. K319 participates in a covalent cross-link: Glycyl lysine isopeptide (Lys-Gly) (interchain with G-Cter in ubiquitin). R341 contacts NAD(+).

The protein belongs to the zinc-containing alcohol dehydrogenase family. In terms of assembly, homotetramer. Zn(2+) serves as cofactor.

The protein localises to the cytoplasm. The catalysed reaction is a primary alcohol + NAD(+) = an aldehyde + NADH + H(+). The enzyme catalyses a secondary alcohol + NAD(+) = a ketone + NADH + H(+). It carries out the reaction ethanol + NAD(+) = acetaldehyde + NADH + H(+). It catalyses the reaction allyl alcohol + NADP(+) = acrolein + NADPH + H(+). The catalysed reaction is 1-propanol + NAD(+) = propanal + NADH + H(+). The enzyme catalyses butan-1-ol + NAD(+) = butanal + NADH + H(+). It carries out the reaction hexan-1-ol + NAD(+) = hexanal + NADH + H(+). It catalyses the reaction (R)-lactaldehyde + NAD(+) = methylglyoxal + NADH + H(+). The catalysed reaction is octan-1-ol + NAD(+) = octanal + NADH + H(+). The enzyme catalyses butan-2-ol + NAD(+) = butan-2-one + NADH + H(+). It carries out the reaction propan-2-ol + NAD(+) = acetone + NADH + H(+). It catalyses the reaction isobutanol + NAD(+) = 2-methylpropanal + NADH + H(+). Functionally, preferentially fermentative isozyme that reduces acetaldehyde to ethanol during the fermentation of glucose. Major enzyme required for the conversion of acetaldehyde to ethanol. Plays a key role in the carbohydrate metabolism through the regeneration of NAD(+) from glycolytic NADH. In the reverse reaction, preferentially catalyzes the conversion of primary unbranched alcohols to their corresponding aldehydes. Also shows activity toward secondary alcohols. Most active with ethanol, and its activity decreases as the size of the alcohol is increased. The chain is Alcohol dehydrogenase 1 (ADH1) from Saccharomyces cerevisiae (strain ATCC 204508 / S288c) (Baker's yeast).